Consider the following 91-residue polypeptide: Teretoxin Tan22.13 (91 aa).

An N-terminal signal peptide occupies residues 1 to 21 (MKVQILFALMMVLVTLCLGQK). The propeptide occupies 22-24 (MQR).

This sequence belongs to the teretoxin C (TC) superfamily. Contains 4 disulfide bonds. In terms of tissue distribution, expressed by the venom duct.

The protein resides in the secreted. The sequence is that of Teretoxin Tan22.13 from Terebra anilis (Auger snail).